We begin with the raw amino-acid sequence, 74 residues long: UPF0346 protein RBAM_019500 (74 aa).

Belongs to the UPF0346 family.

The protein is UPF0346 protein RBAM_019500 of Bacillus velezensis (strain DSM 23117 / BGSC 10A6 / LMG 26770 / FZB42) (Bacillus amyloliquefaciens subsp. plantarum).